A 432-amino-acid polypeptide reads, in one-letter code: Adenylosuccinate synthetase (432 aa).

GTP-binding positions include 12–18 and 40–42; these read GDEGKGK and GHT. The active-site Proton acceptor is the Asp13. Mg(2+)-binding residues include Asp13 and Gly40. IMP contacts are provided by residues 13–16, 38–41, Thr132, Arg146, Gln226, Thr241, and Arg305; these read DEGK and NAGH. His41 acts as the Proton donor in catalysis. Residue 301–307 coordinates substrate; that stretch reads TVTGRKR. GTP is bound by residues Arg307, 333 to 335, and 415 to 417; these read KLD and STS.

The protein belongs to the adenylosuccinate synthetase family. In terms of assembly, homodimer. Mg(2+) is required as a cofactor.

The protein localises to the cytoplasm. It carries out the reaction IMP + L-aspartate + GTP = N(6)-(1,2-dicarboxyethyl)-AMP + GDP + phosphate + 2 H(+). It functions in the pathway purine metabolism; AMP biosynthesis via de novo pathway; AMP from IMP: step 1/2. Plays an important role in the de novo pathway of purine nucleotide biosynthesis. Catalyzes the first committed step in the biosynthesis of AMP from IMP. In Sinorhizobium fredii (strain NBRC 101917 / NGR234), this protein is Adenylosuccinate synthetase.